Here is a 644-residue protein sequence, read N- to C-terminus: Acetolactate synthase 1, chloroplastic (644 aa).

Residues 1 to 43 (MATTAAAAAAALSAAATAKTGRKNHQRHHVLPARGRVGAAAVR) constitute a chloroplast transit peptide. Residues 47 to 67 (VSPVTPPSPAPPATPLRPWGP) form a disordered region. Residues 50 to 61 (VTPPSPAPPATP) show a composition bias toward pro residues. Glutamate 118 lines the thiamine diphosphate pocket. A disulfide bridge links cysteine 138 with cysteine 284. Residues arginine 220, 326–347 (HGTVYANYAVDKADLLLAFGVR), and 369–388 (DIDPAEIGKNKQPHVSICAD) contribute to the FAD site. Residues 461–541 (QHQMWAAQYY…VKVMVLNNQH (81 aa)) are thiamine pyrophosphate binding. Aspartate 512 and asparagine 539 together coordinate Mg(2+).

It belongs to the TPP enzyme family. Requires Mg(2+) as cofactor. Thiamine diphosphate is required as a cofactor.

It localises to the plastid. It is found in the chloroplast. The enzyme catalyses 2 pyruvate + H(+) = (2S)-2-acetolactate + CO2. It participates in amino-acid biosynthesis; L-isoleucine biosynthesis; L-isoleucine from 2-oxobutanoate: step 1/4. Its pathway is amino-acid biosynthesis; L-valine biosynthesis; L-valine from pyruvate: step 1/4. This is Acetolactate synthase 1, chloroplastic (ALS1) from Oryza sativa subsp. japonica (Rice).